Consider the following 342-residue polypeptide: Tetraacyldisaccharide 4'-kinase (342 aa).

Thr68–Thr75 contributes to the ATP binding site.

The protein belongs to the LpxK family.

It carries out the reaction a lipid A disaccharide + ATP = a lipid IVA + ADP + H(+). It functions in the pathway glycolipid biosynthesis; lipid IV(A) biosynthesis; lipid IV(A) from (3R)-3-hydroxytetradecanoyl-[acyl-carrier-protein] and UDP-N-acetyl-alpha-D-glucosamine: step 6/6. Functionally, transfers the gamma-phosphate of ATP to the 4'-position of a tetraacyldisaccharide 1-phosphate intermediate (termed DS-1-P) to form tetraacyldisaccharide 1,4'-bis-phosphate (lipid IVA). This Burkholderia cenocepacia (strain ATCC BAA-245 / DSM 16553 / LMG 16656 / NCTC 13227 / J2315 / CF5610) (Burkholderia cepacia (strain J2315)) protein is Tetraacyldisaccharide 4'-kinase.